The chain runs to 692 residues: Methionine--tRNA ligase (692 aa).

The short motif at 15 to 25 is the 'HIGH' region element; sequence PYANGPIHLGH. Zn(2+) contacts are provided by Cys146, Cys149, Cys159, and Cys162. Residues 332–336 carry the 'KMSKS' region motif; it reads KMSKS. Lys335 contacts ATP. Positions 552–577 are disordered; sequence TTEAAPEKKAKKSAETADVAVDTRSP. Residues 556 to 566 show a composition bias toward basic and acidic residues; the sequence is APEKKAKKSAE. The region spanning 591–692 is the tRNA-binding domain; the sequence is DFAKLDLRIA…EGAQPGMRVK (102 aa).

The protein belongs to the class-I aminoacyl-tRNA synthetase family. MetG type 1 subfamily. Homodimer. Zn(2+) is required as a cofactor.

The protein resides in the cytoplasm. It carries out the reaction tRNA(Met) + L-methionine + ATP = L-methionyl-tRNA(Met) + AMP + diphosphate. Its function is as follows. Is required not only for elongation of protein synthesis but also for the initiation of all mRNA translation through initiator tRNA(fMet) aminoacylation. The polypeptide is Methionine--tRNA ligase (Shewanella sediminis (strain HAW-EB3)).